A 145-amino-acid polypeptide reads, in one-letter code: MYKILCLSLLVAAVAADQVDIKDCANHEIKKVMVPGCKGSEPCVIHRGTAFQLEAVFDANQNSNAAKIEIKATIDGVEIDVPGIDNNLCHFMKCPLVKGQEYDIKYTWNVPRIAPKSENVVVTVKLLGDNGVLACAIATHAKIRD.

The signal sequence occupies residues 1 to 16 (MYKILCLSLLVAAVAA). Disulfide bonds link C24–C135, C37–C43, and C89–C94.

The protein belongs to the NPC2 family.

Its subcellular location is the secreted. In Euroglyphus maynei (Mayne's house dust mite), this protein is Mite group 2 allergen Eur m 2 (EURM2).